The primary structure comprises 470 residues: Cyclic AMP receptor-like protein D (470 aa).

Topologically, residues M1 to G16 are extracellular. The chain crosses the membrane as a helical span at residues Y17–I37. The Cytoplasmic portion of the chain corresponds to K38 to H123. The helical transmembrane segment at F124–L144 threads the bilayer. Residues M145–N176 are Extracellular-facing. N162 carries an N-linked (GlcNAc...) asparagine glycan. C172 and C287 form a disulfide bridge. Residues G177–I197 traverse the membrane as a helical segment. Residues Y198–K253 lie on the Cytoplasmic side of the membrane. A helical transmembrane segment spans residues M254–G274. The Extracellular portion of the chain corresponds to S275–L295. Residues I296–I316 form a helical membrane-spanning segment. The Cytoplasmic portion of the chain corresponds to K317 to R342. A helical membrane pass occupies residues L343–I363. At S364–Q372 the chain is on the extracellular side. Residues F373–L393 traverse the membrane as a helical segment. Residues S394 to K470 are Cytoplasmic-facing.

Belongs to the G-protein coupled receptor 5 family.

It is found in the membrane. Functionally, receptor for cAMP. This Dictyostelium discoideum (Social amoeba) protein is Cyclic AMP receptor-like protein D (crlD).